Here is a 627-residue protein sequence, read N- to C-terminus: Glucokinase regulatory protein (627 aa).

SIS domains follow at residues 90–286 and 320–499; these read VQEV…QGVV and VGIS…LLGK. Residues 109–110, Glu-153, and 179–181 each bind beta-D-fructose 1-phosphate; these read TS and SVG. 109–110 provides a ligand contact to beta-D-fructose 6-phosphate; that stretch reads TS. 179–181 contributes to the beta-D-fructose 6-phosphate binding site; the sequence is SVG. The important for interaction with GCK stretch occupies residues 199 to 200; it reads AV. Glu-348 is a beta-D-fructose 1-phosphate binding site. Residues 463-465 form an essential for interaction with GCK region; that stretch reads LLF. Lys-514 lines the beta-D-fructose 1-phosphate pocket. Position 514 (Lys-514) interacts with beta-D-fructose 6-phosphate.

The protein belongs to the GCKR family. In terms of assembly, interacts (fructose 6-phosphate bound form) with GCK. As to expression, detected in liver (at protein level). Not detected in muscle, brain, heart, testis, intestine or spleen.

The protein localises to the cytoplasm. Its subcellular location is the nucleus. The protein resides in the mitochondrion. Functionally, regulates glucokinase (GCK) by forming an inactive complex with this enzyme. Acts by promoting GCK recruitment to the nucleus, possibly to provide a reserve of GCK that can be quickly released in the cytoplasm after a meal. The affinity of GCKR for GCK is modulated by fructose metabolites: GCKR with bound fructose 6-phosphate has increased affinity for GCK, while GCKR with bound fructose 1-phosphate has strongly decreased affinity for GCK and does not inhibit GCK activity. The chain is Glucokinase regulatory protein from Rattus norvegicus (Rat).